We begin with the raw amino-acid sequence, 211 residues long: ATP phosphoribosyltransferase (211 aa).

This sequence belongs to the ATP phosphoribosyltransferase family. Short subfamily. Heteromultimer composed of HisG and HisZ subunits.

It is found in the cytoplasm. The catalysed reaction is 1-(5-phospho-beta-D-ribosyl)-ATP + diphosphate = 5-phospho-alpha-D-ribose 1-diphosphate + ATP. It participates in amino-acid biosynthesis; L-histidine biosynthesis; L-histidine from 5-phospho-alpha-D-ribose 1-diphosphate: step 1/9. Its function is as follows. Catalyzes the condensation of ATP and 5-phosphoribose 1-diphosphate to form N'-(5'-phosphoribosyl)-ATP (PR-ATP). Has a crucial role in the pathway because the rate of histidine biosynthesis seems to be controlled primarily by regulation of HisG enzymatic activity. This Pseudomonas fluorescens (strain SBW25) protein is ATP phosphoribosyltransferase.